We begin with the raw amino-acid sequence, 361 residues long: Ferredoxin--NADP reductase 1 (361 aa).

FAD-binding residues include aspartate 44, glutamine 52, tyrosine 57, alanine 97, phenylalanine 142, aspartate 308, and serine 349.

Belongs to the ferredoxin--NADP reductase type 2 family. Homodimer. It depends on FAD as a cofactor.

The enzyme catalyses 2 reduced [2Fe-2S]-[ferredoxin] + NADP(+) + H(+) = 2 oxidized [2Fe-2S]-[ferredoxin] + NADPH. The sequence is that of Ferredoxin--NADP reductase 1 from Cupriavidus necator (strain ATCC 17699 / DSM 428 / KCTC 22496 / NCIMB 10442 / H16 / Stanier 337) (Ralstonia eutropha).